The primary structure comprises 194 residues: Putative manganese efflux pump MntP (194 aa).

The next 6 helical transmembrane spans lie at 3–23, 37–57, 65–85, 112–132, 139–159, and 170–190; these read PITI…AAIG, LYVA…GWLL, IATF…IHMI, LAAT…SLAF, IVAA…VMLG, and AEIV…YEHL.

Belongs to the MntP (TC 9.B.29) family.

It is found in the cell inner membrane. Functionally, probably functions as a manganese efflux pump. The sequence is that of Putative manganese efflux pump MntP from Xylella fastidiosa (strain 9a5c).